Here is a 239-residue protein sequence, read N- to C-terminus: Insulin-like growth factor-binding protein 3 receptor (239 aa).

The signal sequence occupies residues 1–38 (MGSCQAGHYLHFCLAHHPPLVCATLILLLLGLSGLGLG). Topologically, residues 39–205 (GFLLTHRTDL…EELTLCGSRL (167 aa)) are extracellular. N-linked (GlcNAc...) asparagine glycans are attached at residues N101 and N167. Residues 206–226 (LVLGFFLILFCGLCCLTAACF) form a helical membrane-spanning segment. At 227–239 (HPRRESHWSRTRL) the chain is on the cytoplasmic side.

In terms of assembly, interacts with IGFBP3. Interacts with CASP8.

It localises to the cell membrane. In terms of biological role, cell death receptor specific for IGFBP3, may mediate caspase-8-dependent apoptosis upon ligand binding. The chain is Insulin-like growth factor-binding protein 3 receptor (TMEM219) from Bos taurus (Bovine).